Here is a 457-residue protein sequence, read N- to C-terminus: RuvB-like helicase 1 (457 aa).

Residue G73–T80 participates in ATP binding.

This sequence belongs to the RuvB family. May form heterododecamers with RVB2. Component of the SWR1 chromatin remodeling complex, the INO80 chromatin remodeling complex, and of the R2TP complex.

It localises to the nucleus. It carries out the reaction ATP + H2O = ADP + phosphate + H(+). Functionally, DNA helicase which participates in several chromatin remodeling complexes, including the SWR1 and the INO80 complexes. The SWR1 complex mediates the ATP-dependent exchange of histone H2A for the H2A variant HZT1 leading to transcriptional regulation of selected genes by chromatin remodeling. The INO80 complex remodels chromatin by shifting nucleosomes and is involved in DNA repair. Also involved in pre-rRNA processing. The sequence is that of RuvB-like helicase 1 (RVB1) from Kluyveromyces lactis (strain ATCC 8585 / CBS 2359 / DSM 70799 / NBRC 1267 / NRRL Y-1140 / WM37) (Yeast).